The sequence spans 76 residues: MSKGIHFEQSITELEEIVRQLEKGELSLEESLKQFEKGISLARRCQNALNQAEQKIETLTGTDSNIELDSDEQTSD.

Belongs to the XseB family. As to quaternary structure, heterooligomer composed of large and small subunits.

Its subcellular location is the cytoplasm. The catalysed reaction is Exonucleolytic cleavage in either 5'- to 3'- or 3'- to 5'-direction to yield nucleoside 5'-phosphates.. Functionally, bidirectionally degrades single-stranded DNA into large acid-insoluble oligonucleotides, which are then degraded further into small acid-soluble oligonucleotides. The protein is Exodeoxyribonuclease 7 small subunit of Legionella pneumophila subsp. pneumophila (strain Philadelphia 1 / ATCC 33152 / DSM 7513).